The following is a 67-amino-acid chain: UPF0434 protein RALTA_A0561 (67 aa).

The protein belongs to the UPF0434 family.

The protein is UPF0434 protein RALTA_A0561 of Cupriavidus taiwanensis (strain DSM 17343 / BCRC 17206 / CCUG 44338 / CIP 107171 / LMG 19424 / R1) (Ralstonia taiwanensis (strain LMG 19424)).